Reading from the N-terminus, the 250-residue chain is Leucyl/phenylalanyl-tRNA--protein transferase (250 aa).

This sequence belongs to the L/F-transferase family.

It localises to the cytoplasm. It carries out the reaction N-terminal L-lysyl-[protein] + L-leucyl-tRNA(Leu) = N-terminal L-leucyl-L-lysyl-[protein] + tRNA(Leu) + H(+). It catalyses the reaction N-terminal L-arginyl-[protein] + L-leucyl-tRNA(Leu) = N-terminal L-leucyl-L-arginyl-[protein] + tRNA(Leu) + H(+). The enzyme catalyses L-phenylalanyl-tRNA(Phe) + an N-terminal L-alpha-aminoacyl-[protein] = an N-terminal L-phenylalanyl-L-alpha-aminoacyl-[protein] + tRNA(Phe). Functionally, functions in the N-end rule pathway of protein degradation where it conjugates Leu, Phe and, less efficiently, Met from aminoacyl-tRNAs to the N-termini of proteins containing an N-terminal arginine or lysine. The polypeptide is Leucyl/phenylalanyl-tRNA--protein transferase (Xanthomonas oryzae pv. oryzae (strain MAFF 311018)).